The chain runs to 533 residues: MSDQATFEFDTDYFVEEFSHCFTGECRVKMLPILYKISQIITGNADLADALSIVLGVMQQHLKMQRGIVTLYDMRAETIFIHDSFGLTEEEKKRGIYAVGEGITGKVVETGKAIVARRLQEHPDFLGRTRVSRNGKAKAAFFCVPIMRAQKVLGTIAAERVYMNPRLLKQDVELLTMIATMIAPLVELYLIENIERVRLENENRRLKHALKERFKPSNIIGNSKPMQEVYELIHKVASTKATVLILGESGVGKELVANAIHYNSPNAEAALVTSNCAPLPENLAESELFGHEKGSFTGALTMHKGCFEQADGGTIFLDEVGELSPTVQAKLVRVLQNRTFERVGGSKPVKVDVRIIAATNRNLVEMVEQGTFREDLYYRLNVFPITVPPLRERGSDVIALADHFVSAFSRENGKNVKRISTPALNMLMSYHWPGNVRELENVMERAVILSDDDVIHSYNLPPSLQTSKESGTAFGLTLEEKIKAVECEMIVEALKNSSGHIGEAAKELGLARRMLGVRMERYGISYKSFSRYA.

The tract at residues 33 to 193 (ILYKISQIIT…PLVELYLIEN (161 aa)) is a domain. The GAF domain maps to 46–186 (DLADALSIVL…MIATMIAPLV (141 aa)). Positions 219-448 (IIGNSKPMQE…LENVMERAVI (230 aa)) constitute a Sigma-54 factor interaction domain. ATP is bound by residues 247–254 (GESGVGKE) and 310–319 (ADGGTIFLDE). The H-T-H motif DNA-binding region spans 501–520 (IGEAAKELGLARRMLGVRME).

AnfA is essential for nitrogen fixation under Mo- and V-deficient conditions. It is required for the regulation of nitrogenase 3 transcription. Interacts with sigma-54. The polypeptide is Nitrogen fixation protein AnfA (anfA) (Azotobacter vinelandii).